We begin with the raw amino-acid sequence, 159 residues long: Transcriptional repressor NrdR (159 aa).

Positions 1–26 (MRCPFCAHDNSQVKDSRPSEDNTSIR) are disordered. A zinc finger spans residues 3–34 (CPFCAHDNSQVKDSRPSEDNTSIRRRRQCEGC). Basic and acidic residues predominate over residues 11–24 (SQVKDSRPSEDNTS). Positions 49 to 139 (VVVVKSGERR…VYRDFTEARD (91 aa)) constitute an ATP-cone domain.

It belongs to the NrdR family. The cofactor is Zn(2+).

In terms of biological role, negatively regulates transcription of bacterial ribonucleotide reductase nrd genes and operons by binding to NrdR-boxes. The polypeptide is Transcriptional repressor NrdR (Novosphingobium aromaticivorans (strain ATCC 700278 / DSM 12444 / CCUG 56034 / CIP 105152 / NBRC 16084 / F199)).